A 229-amino-acid chain; its full sequence is Pdp3-interacting factor 1 (229 aa).

The active-site Nucleophile is the aspartate 12. Residues aspartate 12, aspartate 14, and aspartate 176 each coordinate Mg(2+). Catalysis depends on aspartate 14, which acts as the Proton donor.

Belongs to the HAD-like hydrolase superfamily. As to quaternary structure, component of the mst2 complex composed of at least eaf6, mst2, nto1, pdp3, ptf1, ptf2 and tfg3. Requires Mg(2+) as cofactor.

It localises to the cytoplasm. Its subcellular location is the nucleus. It catalyses the reaction D-ribitol 5-phosphate + H2O = ribitol + phosphate. It carries out the reaction D-sorbitol 6-phosphate + H2O = D-sorbitol + phosphate. The enzyme catalyses sn-glycerol 1-phosphate + H2O = glycerol + phosphate. The catalysed reaction is D-erythrose 4-phosphate + H2O = D-erythrose + phosphate. In terms of biological role, component of the mst2 complex which is a highly specific H3 lysine 14 (H3K14) acetyltransferase that functions together with gcn5 to regulate global levels of H3K14 acetylation (H3K14ac), critical for DNA damage checkpoint activation. Its function is as follows. May also function as a sugar alcohol (polyol) phosphatase that prevents accumulation of toxic levels of polyol phosphates, which can impair glycolysis by inhibiting glucose-6-phosphate isomerase. In Schizosaccharomyces pombe (strain 972 / ATCC 24843) (Fission yeast), this protein is Pdp3-interacting factor 1.